Consider the following 368-residue polypeptide: N-succinylamino acid racemase (368 aa).

2-succinylbenzoate-binding positions include Ser-135 and 161-163 (KLK). Lys-163 serves as the catalytic Proton donor. Mg(2+) is bound at residue Asp-189. Position 191 (Asn-191) interacts with 2-succinylbenzoate. The Mg(2+) site is built by Glu-214 and Asp-239. Residue Lys-263 is the Proton acceptor of the active site. 2-succinylbenzoate is bound at residue Ile-293.

Belongs to the mandelate racemase/muconate lactonizing enzyme family. MenC type 2 subfamily. As to quaternary structure, homooctamer. A divalent metal cation is required as a cofactor.

It carries out the reaction N-acetyl-D-methionine = N-acetyl-L-methionine. The catalysed reaction is (1R,6R)-6-hydroxy-2-succinyl-cyclohexa-2,4-diene-1-carboxylate = 2-succinylbenzoate + H2O. Inhibited by EDTA and sulfhydryl reagents such as p-chloromercuribenzoic acid. Both OSBS and NAAAR activities are inhibited competitively by salicylhydroxamate. Functionally, acts as a N-succinylamino acid racemase (NSAR) that catalyzes the racemization of N-succinyl-phenylglycine and N-succinyl-methionine. Can catalyze the racemization of a broad range of N-acylamino acids, including N-acetyl-D/L-methionine, N-propionyl-D/L-methionine, N-butyryl-D/L-methionine and N-chloroacetyl-L-valine. Also converts 2-succinyl-6-hydroxy-2,4-cyclohexadiene-1-carboxylate (SHCHC) to 2-succinylbenzoate (OSB). Catalyzes both N-succinylamino acid racemization and OSB synthesis at equivalent rates. NSAR is probably the biological function of this enzyme. The chain is N-succinylamino acid racemase from Amycolatopsis sp.